The primary structure comprises 345 residues: 1-aminocyclopropane-1-carboxylate oxidase homolog 7 (345 aa).

A Glycyl lysine isopeptide (Lys-Gly) (interchain with G-Cter in ubiquitin) cross-link involves residue Lys16. The region spanning 194–293 is the Fe2OG dioxygenase domain; sequence KGLHMICHYY…RISIACFFSS (100 aa). Residues His218, Asp220, and His274 each coordinate Fe cation. Arg284 is a binding site for 2-oxoglutarate.

It belongs to the iron/ascorbate-dependent oxidoreductase family. Requires Fe(2+) as cofactor.

The sequence is that of 1-aminocyclopropane-1-carboxylate oxidase homolog 7 from Arabidopsis thaliana (Mouse-ear cress).